We begin with the raw amino-acid sequence, 206 residues long: Large ribosomal subunit protein uL4 (206 aa).

Residues K65–G85 are disordered.

This sequence belongs to the universal ribosomal protein uL4 family. In terms of assembly, part of the 50S ribosomal subunit.

In terms of biological role, one of the primary rRNA binding proteins, this protein initially binds near the 5'-end of the 23S rRNA. It is important during the early stages of 50S assembly. It makes multiple contacts with different domains of the 23S rRNA in the assembled 50S subunit and ribosome. Its function is as follows. Forms part of the polypeptide exit tunnel. The polypeptide is Large ribosomal subunit protein uL4 (Parvibaculum lavamentivorans (strain DS-1 / DSM 13023 / NCIMB 13966)).